We begin with the raw amino-acid sequence, 118 residues long: UPF0102 protein STH1475 (118 aa).

It belongs to the UPF0102 family.

This chain is UPF0102 protein STH1475, found in Symbiobacterium thermophilum (strain DSM 24528 / JCM 14929 / IAM 14863 / T).